Here is a 1214-residue protein sequence, read N- to C-terminus: Myosin-1 (1214 aa).

Residues 1 to 21 (MAIIKRGARNKTAQEPAKRSA) are disordered. Residues 36–715 (VGVSDLTLLS…TLFALEHMRD (680 aa)) enclose the Myosin motor domain. 129–136 (GESGAGKT) serves as a coordination point for ATP. Phosphoserine is present on S357. Residues 404–486 (SIGILDIYGF…PGIFAAMNDS (83 aa)) form an actin-binding region. IQ domains follow at residues 719-739 (YNMA…RIDS) and 740-765 (ATRI…EGSK). Positions 771-961 (KERRTMSLLG…TILVRRGHPA (191 aa)) constitute a TH1 domain. Disordered stretches follow at residues 926–1090 (KPGK…SELP), 1129–1177 (HQGG…AAAQ), and 1193–1214 (NKMR…DDDW). Basic residues predominate over residues 965–980 (QKKKPKKGKGHSKHHS). 2 stretches are compositionally biased toward low complexity: residues 981–1000 (TSTS…APVS) and 1037–1057 (AAQP…QKKV). Positions 1058 to 1067 (APPPPPPPPM) are enriched in pro residues. Residues 1069 to 1131 (SSEPKYEAAY…PTNYVVKHQG (63 aa)) enclose the SH3 domain. Over residues 1157–1177 (VSSSQSETATTATPASVAAAQ) the composition is skewed to low complexity. The span at 1200-1214 (DGEDNGNDDDDDDDW) shows a compositional bias: acidic residues.

This sequence belongs to the TRAFAC class myosin-kinesin ATPase superfamily. Myosin family. In terms of processing, phosphorylation of the TEDS site (Ser-357) is required for the polarization of the actin cytoskeleton. Phosphorylation probably activates the myosin-I ATPase activity.

It localises to the cytoplasm. The protein resides in the cytoskeleton. Its subcellular location is the actin patch. Type-I myosin implicated in the organization of the actin cytoskeleton. Required for proper actin cytoskeleton polarization. At the cell cortex, assembles in patch-like structures together with proteins from the actin-polymerizing machinery and promotes actin assembly. Functions as actin nucleation-promoting factor (NPF) for the Arp2/3 complex. This chain is Myosin-1 (MYO1), found in Vanderwaltozyma polyspora (strain ATCC 22028 / DSM 70294 / BCRC 21397 / CBS 2163 / NBRC 10782 / NRRL Y-8283 / UCD 57-17) (Kluyveromyces polysporus).